Here is a 302-residue protein sequence, read N- to C-terminus: 1,2-dihydroxynaphthalene dioxygenase (302 aa).

2 consecutive VOC domains span residues 9–124 (ELGY…IFWG) and 149–270 (GLGH…PGWR). His152 serves as a coordination point for Fe cation. Substrate is bound by residues His152, 199–200 (DH), His215, and Tyr256. Residue His215 participates in Fe cation binding. Glu266 is a binding site for Fe cation.

This sequence belongs to the extradiol ring-cleavage dioxygenase family. Requires Fe(2+) as cofactor.

It carries out the reaction naphthalene-1,2-diol + O2 = 2-hydroxychromene-2-carboxylate + H(+). Its pathway is aromatic compound metabolism; naphthalene degradation. Its function is as follows. Involved in the naphthalene catabolic pathway. Catalyzes the meta-cleavage of 1,2-dihydroxynaphthalene (1,2-DHN) to yield 2-hydroxychromene-2-carboxylic acid. The polypeptide is 1,2-dihydroxynaphthalene dioxygenase (nahC) (Pseudomonas putida (Arthrobacter siderocapsulatus)).